A 380-amino-acid polypeptide reads, in one-letter code: L-lactate dehydrogenase (380 aa).

Positions 1–380 (MIISSASDYR…DASILVKAVA (380 aa)) constitute an FMN hydroxy acid dehydrogenase domain. Tyrosine 24 contributes to the substrate binding site. 2 residues coordinate FMN: serine 106 and glutamine 127. Tyrosine 129 lines the substrate pocket. Threonine 155 contacts FMN. Residue arginine 164 participates in substrate binding. Lysine 251 lines the FMN pocket. The active-site Proton acceptor is the histidine 275. Residue arginine 278 coordinates substrate. 306–330 (DSGIRSGLDVVRMLALGAKGVLLGR) is an FMN binding site.

This sequence belongs to the FMN-dependent alpha-hydroxy acid dehydrogenase family. In terms of assembly, homotetramer. It depends on FMN as a cofactor.

Its subcellular location is the cell inner membrane. It catalyses the reaction (S)-lactate + A = pyruvate + AH2. Catalyzes the conversion of L-lactate to pyruvate. Is coupled to the respiratory chain. In Pseudomonas syringae pv. syringae (strain B728a), this protein is L-lactate dehydrogenase.